The following is a 483-amino-acid chain: Altronate oxidoreductase (483 aa).

NAD(+) is bound at residue 18 to 29 (IIQFGEGNFLRA).

It belongs to the mannitol dehydrogenase family. UxaB subfamily.

It carries out the reaction D-altronate + NAD(+) = keto-D-tagaturonate + NADH + H(+). It participates in carbohydrate metabolism; pentose and glucuronate interconversion. This is Altronate oxidoreductase (uxaB) from Escherichia coli O157:H7.